The primary structure comprises 160 residues: UPF0178 protein PSPA7_5991 (160 aa).

This sequence belongs to the UPF0178 family.

The sequence is that of UPF0178 protein PSPA7_5991 from Pseudomonas paraeruginosa (strain DSM 24068 / PA7) (Pseudomonas aeruginosa (strain PA7)).